A 549-amino-acid polypeptide reads, in one-letter code: Hydroxylamine reductase (549 aa).

Residues C3, C6, C15, and C21 each contribute to the [4Fe-4S] cluster site. 8 residues coordinate hybrid [4Fe-2O-2S] cluster: H244, E268, C313, C405, C433, C458, E492, and K494. Residue C405 is modified to Cysteine persulfide.

It belongs to the HCP family. [4Fe-4S] cluster is required as a cofactor. It depends on hybrid [4Fe-2O-2S] cluster as a cofactor.

Its subcellular location is the cytoplasm. The enzyme catalyses A + NH4(+) + H2O = hydroxylamine + AH2 + H(+). In terms of biological role, catalyzes the reduction of hydroxylamine to form NH(3) and H(2)O. This is Hydroxylamine reductase from Gloeothece citriformis (strain PCC 7424) (Cyanothece sp. (strain PCC 7424)).